Reading from the N-terminus, the 277-residue chain is 5-formyltetrahydrofolate cyclo-ligase, mitochondrial (277 aa).

The N-terminal 48 residues, 1 to 48, are a transit peptide targeting the mitochondrion; it reads MIGARVFCITTTALRRSPIFFFPKIPTRPVFRLSPATRPIVAMSTTSK. Residue 60–64 participates in ATP binding; the sequence is KRVVR. Substrate is bound by residues E113 and 207 to 211; that span reads RGGGY. ATP contacts are provided by residues 206 to 213 and D254; that span reads GRGGGYYD.

The protein belongs to the 5-formyltetrahydrofolate cyclo-ligase family. Monomer.

Its subcellular location is the mitochondrion. It catalyses the reaction (6S)-5-formyl-5,6,7,8-tetrahydrofolate + ATP = (6R)-5,10-methenyltetrahydrofolate + ADP + phosphate. Contributes to tetrahydrofolate metabolism and photorespiration through the regulation of serine hydroxymethyltransferase. Prefers the pentalutamyl to the monoglutamyl form of 5-formyltetrahydrofolate. This Arabidopsis thaliana (Mouse-ear cress) protein is 5-formyltetrahydrofolate cyclo-ligase, mitochondrial (5FCL).